Here is a 201-residue protein sequence, read N- to C-terminus: Putative manganese efflux pump MntP 2 (201 aa).

The next 6 membrane-spanning stretches (helical) occupy residues 3–23, 39–59, 65–85, 116–136, 141–161, and 176–196; these read LISV…VSIT, IGLF…SIGI, IAAL…GKMI, LILL…SFAF, IINT…IGVM, and ILGG…HTNI.

This sequence belongs to the MntP (TC 9.B.29) family.

It is found in the cell membrane. Functionally, probably functions as a manganese efflux pump. The protein is Putative manganese efflux pump MntP 2 of Clostridium botulinum (strain Hall / ATCC 3502 / NCTC 13319 / Type A).